A 774-amino-acid chain; its full sequence is MANKTKKPIYPFEDWVIRETQFSIDTNYRNETIFTLANGYIGMRGTFEERYSGPKNTSFNGTYINGFYEIHDIVYPEGGYGFAKIGQTMLNVADSKIIKLYVDGEEFDLLQGKILFYERVLDMKKGFVERKVKWESPTGKILEVKIKRIVSLNRQHLAAISFTMQPVNFTGKIRFVSAIDGNVSNINDSEDVRVGSNLKGKVLKTIDKSVEGLKGWIVQKTQKSNFSYACAIDNVLVADSKYEVSNSLEEDGVKVIVDLEAEKGTSYTLNKFISYYTSKDFDENKLVALALEEIEKAKNDGFETIEKEQEEFLNSFWKDADVIIEGDKALQQGIRFNEFHLLQSVGRDGKTNIAAKGLTGGGYEGHYFWDSDIYIMPFFLYTKPEIAKALVMYRYNLLDAARSRAKELGHKGALYPWRTIDGPECSAYFPAGTAQYHINADIVYALKRYVEATNDVDFLYDYGCEILFETARFWEDLGAYIPLKGNKFCINCVTGPDEYTALVDNNAYTNYMAKMNLEYAYDIANKMKKEVPQKYQKVASKLNLKDEEIVAWKKAADNMYLPYSKELDIIPQDDSFLYKERITVDEIPEDQFPLLLHWHYLNIYRYQICKQPDVLLLMFLQREKFTKDELKKNYDYYEPITTHDSSLSPAIFSILANEIGYTDKAYKYFMMTARMDLDDYNDNVKDGIHAASMAGTWSAVVNGFGGMRVYTNELHFEPRLPKEWNLLSFNVRYKGRKINVKLTKENVVFALLEGEPIEIYYFDKKILLEKGEIK.

369 to 370 (WD) contacts substrate. Glu498 (proton donor) is an active-site residue. Position 610–611 (610–611 (KQ)) interacts with substrate.

It belongs to the glycosyl hydrolase 65 family. As to quaternary structure, homodimer.

It catalyses the reaction alpha,alpha-trehalose + phosphate = beta-D-glucose 1-phosphate + D-glucose. It participates in glycan degradation; trehalose degradation. Its activity is regulated as follows. Inhibited by Cu(2+), Hg(2+), Mg(2+), Mn(2+), Pb(2+) and Zn(2+). In terms of biological role, catalyzes the reversible phosphorolytic cleavage of trehalose. Phosphorolysis is specific for trehalose, but D-xylose, D-galactose, L-arabinose, D-fucose, L-fucose, D-glucosamine and 2-deoxy D-glucose can act as substitutes for D-glucose in the synthetic reaction. The polypeptide is Alpha,alpha-trehalose phosphorylase (treP) (Thermoanaerobacter brockii (Thermoanaerobium brockii)).